A 373-amino-acid chain; its full sequence is ATP phosphoribosyltransferase regulatory subunit (373 aa).

Belongs to the class-II aminoacyl-tRNA synthetase family. HisZ subfamily. In terms of assembly, heteromultimer composed of HisG and HisZ subunits.

It is found in the cytoplasm. It functions in the pathway amino-acid biosynthesis; L-histidine biosynthesis; L-histidine from 5-phospho-alpha-D-ribose 1-diphosphate: step 1/9. Functionally, required for the first step of histidine biosynthesis. May allow the feedback regulation of ATP phosphoribosyltransferase activity by histidine. The protein is ATP phosphoribosyltransferase regulatory subunit of Chelativorans sp. (strain BNC1).